Consider the following 309-residue polypeptide: GTP cyclohydrolase MptA (309 aa).

It belongs to the GTP cyclohydrolase IV family. As to quaternary structure, homodimer. Fe(2+) serves as cofactor.

The enzyme catalyses GTP + H2O = 7,8-dihydroneopterin 2',3'-cyclic phosphate + formate + diphosphate + H(+). It participates in cofactor biosynthesis; 5,6,7,8-tetrahydromethanopterin biosynthesis. Its function is as follows. Converts GTP to 7,8-dihydro-D-neopterin 2',3'-cyclic phosphate, the first intermediate in the biosynthesis of coenzyme methanopterin. In Haloquadratum walsbyi (strain DSM 16790 / HBSQ001), this protein is GTP cyclohydrolase MptA.